Reading from the N-terminus, the 319-residue chain is Annexin A5 (319 aa).

Ala2 carries the N-acetylalanine modification. Annexin repeat units follow at residues 13–84 (FDGR…AMMK), 85–156 (PSRL…VLLQ), 168–240 (AQVE…AVVK), and 244–315 (SIPA…LLCG). Residue Lys27 forms a Glycyl lysine isopeptide (Lys-Gly) (interchain with G-Cter in SUMO1); alternate linkage. A Glycyl lysine isopeptide (Lys-Gly) (interchain with G-Cter in SUMO2); alternate cross-link involves residue Lys27. Ser35 is modified (phosphoserine). N6-acetyllysine is present on residues Lys68, Lys74, Lys77, Lys95, and Lys99. An N6-succinyllysine modification is found at Lys288. A [IL]-x-C-x-x-[DE] motif motif is present at residues 312-318 (LLCGGED).

Belongs to the annexin family. In terms of assembly, monomer. Binds ATRX and EIF5B. In terms of processing, S-nitrosylation is induced by interferon-gamma and oxidatively-modified low-densitity lipoprotein (LDL(ox)) possibly implicating the iNOS-S100A8/9 transnitrosylase complex.

Functionally, this protein is an anticoagulant protein that acts as an indirect inhibitor of the thromboplastin-specific complex, which is involved in the blood coagulation cascade. The protein is Annexin A5 (Anxa5) of Mus musculus (Mouse).